We begin with the raw amino-acid sequence, 98 residues long: Citrate lyase acyl carrier protein (98 aa).

O-(phosphoribosyl dephospho-coenzyme A)serine is present on Ser14.

It belongs to the CitD family. In terms of assembly, oligomer with a subunit composition of (alpha,beta,gamma)6.

Its subcellular location is the cytoplasm. Its function is as follows. Covalent carrier of the coenzyme of citrate lyase. This Shigella boydii serotype 4 (strain Sb227) protein is Citrate lyase acyl carrier protein.